A 249-amino-acid polypeptide reads, in one-letter code: (S)-1-Phenylethanol dehydrogenase (249 aa).

NAD(+) is bound by residues 17–19, Asp-38, 61–63, Asn-89, and Tyr-93; these read NGI and CDV. Position 141 (Ser-141) interacts with substrate. Residue Tyr-154 is the Proton acceptor of the active site. Residues Lys-158, 184–187, and Thr-191 contribute to the NAD(+) site; that span reads PSLV.

Belongs to the short-chain dehydrogenases/reductases (SDR) family. Homotetramer.

It catalyses the reaction (S)-1-phenylethanol + NAD(+) = acetophenone + NADH + H(+). In terms of biological role, catalyzes the NAD-dependent stereospecific oxidation of (S)-1-phenylethanol to acetophenone in the degradation of ethylbenzene. In Aromatoleum aromaticum (strain DSM 19018 / LMG 30748 / EbN1) (Azoarcus sp. (strain EbN1)), this protein is (S)-1-Phenylethanol dehydrogenase (ped).